Consider the following 307-residue polypeptide: Homoserine O-acetyltransferase (307 aa).

The Acyl-thioester intermediate role is filled by C142. Positions 163 and 192 each coordinate substrate. The active-site Proton acceptor is H235. E237 is a catalytic residue. Substrate is bound at residue R249.

It belongs to the MetA family.

It localises to the cytoplasm. The enzyme catalyses L-homoserine + acetyl-CoA = O-acetyl-L-homoserine + CoA. Its pathway is amino-acid biosynthesis; L-methionine biosynthesis via de novo pathway; O-acetyl-L-homoserine from L-homoserine: step 1/1. Its function is as follows. Transfers an acetyl group from acetyl-CoA to L-homoserine, forming acetyl-L-homoserine. The protein is Homoserine O-acetyltransferase of Sinorhizobium fredii (strain NBRC 101917 / NGR234).